We begin with the raw amino-acid sequence, 85 residues long: Protein 19.2 (85 aa).

In Escherichia coli (Bacteriophage T7), this protein is Protein 19.2.